The following is a 361-amino-acid chain: GTPase Obg (361 aa).

Residues 1-159 (MKFVDEAFID…KNLKLELKVL (159 aa)) form the Obg domain. The OBG-type G domain occupies 160–334 (ADVGLLGMPN…LIKTIYQHVK (175 aa)). GTP contacts are provided by residues 166 to 173 (GMPNAGKS), 191 to 195 (FTTLH), 213 to 216 (DLPG), 284 to 287 (NKLD), and 315 to 317 (SAL). Mg(2+) is bound by residues Ser-173 and Thr-193. A disordered region spans residues 339–361 (SEQPVEEVDPRFVPLPPESPETP). Positions 351 to 361 (VPLPPESPETP) are enriched in pro residues.

The protein belongs to the TRAFAC class OBG-HflX-like GTPase superfamily. OBG GTPase family. As to quaternary structure, monomer. Requires Mg(2+) as cofactor.

It localises to the cytoplasm. An essential GTPase which binds GTP, GDP and possibly (p)ppGpp with moderate affinity, with high nucleotide exchange rates and a fairly low GTP hydrolysis rate. Plays a role in control of the cell cycle, stress response, ribosome biogenesis and in those bacteria that undergo differentiation, in morphogenesis control. The polypeptide is GTPase Obg (Polaromonas sp. (strain JS666 / ATCC BAA-500)).